The primary structure comprises 385 residues: Methionine aminopeptidase 1 (385 aa).

A C6H2-type zinc finger spans residues 6–59 (TRVCETAGCSSEAKLQCPTCLKLGIQGSYFCSQECFKGSWATHKLLHKKAKDEK). Zn(2+) contacts are provided by Cys9, Cys14, Cys22, Cys25, Cys36, Cys40, His48, and His52. His203 is an a protein binding site. Residues Asp220, Asp231, and His294 each contribute to the Zn(2+) site. Residue His301 participates in a protein binding. Zn(2+) contacts are provided by Glu327 and Glu358.

The protein belongs to the peptidase M24A family. Methionine aminopeptidase type 1 subfamily. As to quaternary structure, associates with the 60S ribosomal subunit of the 80S translational complex. Zn(2+) serves as cofactor. Requires Co(2+) as cofactor. It depends on Mn(2+) as a cofactor. The cofactor is Fe(2+).

It is found in the cytoplasm. The catalysed reaction is Release of N-terminal amino acids, preferentially methionine, from peptides and arylamides.. Cotranslationally removes the N-terminal methionine from nascent proteins. The N-terminal methionine is often cleaved when the second residue in the primary sequence is small and uncharged (Met-Ala-, Cys, Gly, Pro, Ser, Thr, or Val). The protein is Methionine aminopeptidase 1 (METAP1) of Gallus gallus (Chicken).